Here is a 385-residue protein sequence, read N- to C-terminus: NADH-quinone oxidoreductase subunit D 2 (385 aa).

The protein belongs to the complex I 49 kDa subunit family. NDH-1 is composed of 14 different subunits. Subunits NuoB, C, D, E, F, and G constitute the peripheral sector of the complex.

The protein localises to the cell membrane. The enzyme catalyses a quinone + NADH + 5 H(+)(in) = a quinol + NAD(+) + 4 H(+)(out). Functionally, NDH-1 shuttles electrons from NADH, via FMN and iron-sulfur (Fe-S) centers, to quinones in the respiratory chain. The immediate electron acceptor for the enzyme in this species is believed to be a menaquinone. Couples the redox reaction to proton translocation (for every two electrons transferred, four hydrogen ions are translocated across the cytoplasmic membrane), and thus conserves the redox energy in a proton gradient. In Salinispora arenicola (strain CNS-205), this protein is NADH-quinone oxidoreductase subunit D 2.